Here is a 151-residue protein sequence, read N- to C-terminus: Endoribonuclease YbeY (151 aa).

Zn(2+)-binding residues include H108, H112, and D118.

This sequence belongs to the endoribonuclease YbeY family. Requires Zn(2+) as cofactor.

Its subcellular location is the cytoplasm. Its function is as follows. Single strand-specific metallo-endoribonuclease involved in late-stage 70S ribosome quality control and in maturation of the 3' terminus of the 16S rRNA. The sequence is that of Endoribonuclease YbeY from Porphyromonas gingivalis (strain ATCC 33277 / DSM 20709 / CIP 103683 / JCM 12257 / NCTC 11834 / 2561).